The primary structure comprises 314 residues: Homoserine kinase (314 aa).

Position 96–106 (Pro96–Cys106) interacts with ATP.

This sequence belongs to the GHMP kinase family. Homoserine kinase subfamily.

Its subcellular location is the cytoplasm. The enzyme catalyses L-homoserine + ATP = O-phospho-L-homoserine + ADP + H(+). Its pathway is amino-acid biosynthesis; L-threonine biosynthesis; L-threonine from L-aspartate: step 4/5. Functionally, catalyzes the ATP-dependent phosphorylation of L-homoserine to L-homoserine phosphate. The polypeptide is Homoserine kinase (Mannheimia succiniciproducens (strain KCTC 0769BP / MBEL55E)).